The following is a 95-amino-acid chain: Co-chaperonin GroES (95 aa).

Belongs to the GroES chaperonin family. Heptamer of 7 subunits arranged in a ring. Interacts with the chaperonin GroEL.

The protein localises to the cytoplasm. Together with the chaperonin GroEL, plays an essential role in assisting protein folding. The GroEL-GroES system forms a nano-cage that allows encapsulation of the non-native substrate proteins and provides a physical environment optimized to promote and accelerate protein folding. GroES binds to the apical surface of the GroEL ring, thereby capping the opening of the GroEL channel. This is Co-chaperonin GroES from Chlorobium limicola (strain DSM 245 / NBRC 103803 / 6330).